We begin with the raw amino-acid sequence, 1012 residues long: DNA polymerase catalytic subunit (1012 aa).

It belongs to the DNA polymerase type-B family.

The protein resides in the host nucleus. The catalysed reaction is DNA(n) + a 2'-deoxyribonucleoside 5'-triphosphate = DNA(n+1) + diphosphate. The sequence is that of DNA polymerase catalytic subunit (U38) from Human herpesvirus 6A (strain Uganda-1102) (HHV-6 variant A).